The sequence spans 157 residues: Small ribosomal subunit protein uS7 (157 aa).

Belongs to the universal ribosomal protein uS7 family. In terms of assembly, part of the 30S ribosomal subunit. Contacts proteins S9 and S11.

In terms of biological role, one of the primary rRNA binding proteins, it binds directly to 16S rRNA where it nucleates assembly of the head domain of the 30S subunit. Is located at the subunit interface close to the decoding center, probably blocks exit of the E-site tRNA. This Desulfotalea psychrophila (strain LSv54 / DSM 12343) protein is Small ribosomal subunit protein uS7.